The primary structure comprises 254 residues: MTLNEVTISRAILEEQHRALIDHLEMDAAVIGGGPSGLACAALLGEKGVKCALIEKKLSIGGGMWGGGMMFPRIVVQEDARRLLDRFGIAYKAFEEGYYVAKSVEAVAKLTAAACDAGVEFFNLTTVEDVMIRGDGRIGGLVVNWTPVDMAGLHVDPLTMACTCTVDATGHDAMIARMVEKKGGALTVKGESFMWAERAESQILAHTKEVFPGLFVTGMAANAVAGECRMGPIFGGMLLSGERAAELVAERLGR.

Residues Ser-36, 55-56, Gly-63, Val-127, and 154-156 contribute to the NAD(+) site; these read EK and HVD. Residues Asp-156 and His-171 each coordinate Fe cation. Residue Met-219 coordinates NAD(+). Glycine is bound at residue Arg-229.

This sequence belongs to the THI4 family. As to quaternary structure, homooctamer; tetramer of dimers. It depends on Fe(2+) as a cofactor.

It catalyses the reaction hydrogen sulfide + glycine + NAD(+) = ADP-5-ethyl-4-methylthiazole-2-carboxylate + nicotinamide + 3 H2O + H(+). Its pathway is cofactor biosynthesis; thiamine diphosphate biosynthesis. Its function is as follows. Involved in the biosynthesis of the thiazole moiety of thiamine. Catalyzes the conversion of NAD and glycine to adenosine diphosphate 5-(2-hydroxyethyl)-4-methylthiazole-2-carboxylate (ADT), an adenylated thiazole intermediate, using free sulfide as a source of sulfur. This is Thiamine thiazole synthase from Methanoculleus marisnigri (strain ATCC 35101 / DSM 1498 / JR1).